A 118-amino-acid polypeptide reads, in one-letter code: Small ribosomal subunit protein uS13 (118 aa).

The interval 94-118 (GLPVHGQRTKTNARTRKGPAKSITR) is disordered.

Belongs to the universal ribosomal protein uS13 family. In terms of assembly, part of the 30S ribosomal subunit. Forms a loose heterodimer with protein S19. Forms two bridges to the 50S subunit in the 70S ribosome.

Its function is as follows. Located at the top of the head of the 30S subunit, it contacts several helices of the 16S rRNA. In the 70S ribosome it contacts the 23S rRNA (bridge B1a) and protein L5 of the 50S subunit (bridge B1b), connecting the 2 subunits; these bridges are implicated in subunit movement. Contacts the tRNAs in the A and P-sites. The protein is Small ribosomal subunit protein uS13 of Acidithiobacillus ferrooxidans (strain ATCC 23270 / DSM 14882 / CIP 104768 / NCIMB 8455) (Ferrobacillus ferrooxidans (strain ATCC 23270)).